Here is a 59-residue protein sequence, read N- to C-terminus: SPbeta prophage-derived uncharacterized protein YosB (59 aa).

In Bacillus subtilis (strain 168), this protein is SPbeta prophage-derived uncharacterized protein YosB (yosB).